The primary structure comprises 507 residues: NAD(P)H-quinone oxidoreductase chain 4, chloroplastic (507 aa).

15 helical membrane passes run 4 to 24 (FPWLTIIVVFPILTGSLIFLL), 37 to 57 (LCICILELLLTTYTFCYHFQL), 87 to 107 (IGPILLTGFITTLATLAAWPV), 111 to 131 (AQLFHFLMLAMYSGQIGSFSS), 134 to 154 (LLLFFLMWEFELIPVYLLLSM), 167 to 187 (FILYTAGGSIFLLIGVLGIGL), 208 to 228 (ALEVIFYVGFLIAFAVKLPII), 242 to 262 (HYSTCMLLAGILLKMGAYGLV), 272 to 292 (AHCLFSPGLIIVGAIQIIYAA), 305 to 325 (IAYSSISHMGFIIIGIGSLSD), 330 to 350 (GAILQIISHGFIGAALFFLAG), 386 to 406 (LALPGLSGFVAELLVFFGIIT), 416 to 436 (ILIAFLMAIGMILTPIYSLSM), 462 to 482 (LFVSISLLLPIIGIGIYPDFV), and 483 to 503 (LSLSVEKVEAIISHFFFSIVF).

The protein belongs to the complex I subunit 4 family.

Its subcellular location is the plastid. It localises to the chloroplast thylakoid membrane. It carries out the reaction a plastoquinone + NADH + (n+1) H(+)(in) = a plastoquinol + NAD(+) + n H(+)(out). The catalysed reaction is a plastoquinone + NADPH + (n+1) H(+)(in) = a plastoquinol + NADP(+) + n H(+)(out). The protein is NAD(P)H-quinone oxidoreductase chain 4, chloroplastic (ndhD) of Oenothera elata subsp. hookeri (Hooker's evening primrose).